Here is a 392-residue protein sequence, read N- to C-terminus: Integrin-linked kinase-associated serine/threonine phosphatase 2C (392 aa).

Methionine 1 is subject to N-acetylmethionine. Residues 1–91 are disordered; it reads MDLFGDLPEP…PEEEKNGGEE (91 aa). Over residues 56 to 70 the composition is skewed to polar residues; that stretch reads SGNSGSLATSGSQVV. Residues 72–91 show a composition bias toward basic and acidic residues; it reads TEGKGAKRKAPEEEKNGGEE. Residues 108–390 enclose the PPM-type phosphatase domain; sequence KGYVAERKGE…DNVTVMVVRI (283 aa). Aspartate 152 and glycine 153 together coordinate Mn(2+). At lysine 210 the chain carries N6-acetyllysine. Residues aspartate 326 and aspartate 381 each contribute to the Mn(2+) site.

The protein belongs to the PP2C family. In terms of assembly, interacts with ILK. Requires Mg(2+) as cofactor. It depends on Mn(2+) as a cofactor.

The protein localises to the cytoplasm. It carries out the reaction O-phospho-L-seryl-[protein] + H2O = L-seryl-[protein] + phosphate. The catalysed reaction is O-phospho-L-threonyl-[protein] + H2O = L-threonyl-[protein] + phosphate. Protein phosphatase that may play a role in regulation of cell cycle progression via dephosphorylation of its substrates whose appropriate phosphorylation states might be crucial for cell proliferation. Selectively associates with integrin linked kinase (ILK), to modulate cell adhesion and growth factor signaling. Inhibits the ILK-GSK3B signaling axis and may play an important role in inhibiting oncogenic transformation. The polypeptide is Integrin-linked kinase-associated serine/threonine phosphatase 2C (Ilkap) (Mus musculus (Mouse)).